The chain runs to 327 residues: Transaldolase (327 aa).

Lys-132 functions as the Schiff-base intermediate with substrate in the catalytic mechanism.

This sequence belongs to the transaldolase family. Type 1 subfamily. In terms of assembly, homodimer.

Its subcellular location is the cytoplasm. The enzyme catalyses D-sedoheptulose 7-phosphate + D-glyceraldehyde 3-phosphate = D-erythrose 4-phosphate + beta-D-fructose 6-phosphate. The protein operates within carbohydrate degradation; pentose phosphate pathway; D-glyceraldehyde 3-phosphate and beta-D-fructose 6-phosphate from D-ribose 5-phosphate and D-xylulose 5-phosphate (non-oxidative stage): step 2/3. In terms of biological role, transaldolase is important for the balance of metabolites in the pentose-phosphate pathway. The sequence is that of Transaldolase from Chlamydia felis (strain Fe/C-56) (Chlamydophila felis).